The sequence spans 217 residues: 3,4-dihydroxy-2-butanone 4-phosphate synthase (217 aa).

D-ribulose 5-phosphate-binding positions include 37–38 (RE), Asp42, 150–154 (RQGHT), and Glu174. A Mg(2+)-binding site is contributed by Glu38. Mg(2+) is bound at residue His153.

It belongs to the DHBP synthase family. As to quaternary structure, homodimer. Requires Mg(2+) as cofactor. Mn(2+) is required as a cofactor.

It catalyses the reaction D-ribulose 5-phosphate = (2S)-2-hydroxy-3-oxobutyl phosphate + formate + H(+). It participates in cofactor biosynthesis; riboflavin biosynthesis; 2-hydroxy-3-oxobutyl phosphate from D-ribulose 5-phosphate: step 1/1. Its function is as follows. Catalyzes the conversion of D-ribulose 5-phosphate to formate and 3,4-dihydroxy-2-butanone 4-phosphate. The chain is 3,4-dihydroxy-2-butanone 4-phosphate synthase from Desulforamulus reducens (strain ATCC BAA-1160 / DSM 100696 / MI-1) (Desulfotomaculum reducens).